The chain runs to 185 residues: Large ribosomal subunit protein uL5 (185 aa).

It belongs to the universal ribosomal protein uL5 family. In terms of assembly, part of the 50S ribosomal subunit; part of the 5S rRNA/L5/L18/L25 subcomplex. Contacts the 5S rRNA and the P site tRNA. Forms a bridge to the 30S subunit in the 70S ribosome.

Its function is as follows. This is one of the proteins that bind and probably mediate the attachment of the 5S RNA into the large ribosomal subunit, where it forms part of the central protuberance. In the 70S ribosome it contacts protein S13 of the 30S subunit (bridge B1b), connecting the 2 subunits; this bridge is implicated in subunit movement. Contacts the P site tRNA; the 5S rRNA and some of its associated proteins might help stabilize positioning of ribosome-bound tRNAs. The chain is Large ribosomal subunit protein uL5 from Magnetococcus marinus (strain ATCC BAA-1437 / JCM 17883 / MC-1).